Consider the following 384-residue polypeptide: Mitogen-activated protein kinase 8 (384 aa).

The region spanning 26–321 (YQNLKPIGSG…VDEALQHPYI (296 aa)) is the Protein kinase domain. ATP-binding positions include 32–40 (IGSGAQGIV) and Lys-55. Position 116 is an S-nitrosocysteine (Cys-116). The Proton acceptor role is filled by Asp-151. Thr-183 is subject to Phosphothreonine; by MAP2K7. Residues 183-185 (TPY) carry the TXY motif. Phosphotyrosine; by MAP2K4 is present on Tyr-185. At Ser-377 the chain carries Phosphoserine.

This sequence belongs to the protein kinase superfamily. CMGC Ser/Thr protein kinase family. MAP kinase subfamily. Binds to at least four scaffolding proteins, MAPK8IP1/JIP-1, MAPK8IP2/JIP-2, MAPK8IP3/JIP-3/JSAP1 and SPAG9/MAPK8IP4/JIP-4. These proteins also bind other components of the JNK signaling pathway. Forms a complex with MAPK8IP1 and ARHGEF28. Interacts with TP53 and WWOX. Interacts with JAMP. Interacts with NFATC4. Interacts with MECOM; regulates JNK signaling. Interacts with PIN1; this interaction mediates MAPK8 conformational changes leading to the binding of MAPK8 to its substrates. Interacts with HSF1 (via D domain and preferentially with hyperphosphorylated form); this interaction occurs under both normal growth conditions and immediately upon heat shock. Interacts (phosphorylated form) with NFE2; the interaction phosphorylates NFE2 in undifferentiated cells. Interacts with GRIPAP1. Interacts with POU5F1; phosphorylates POU5F1 at 'Ser-347'. Found in a complex with SH3RF1, RAC1, MAP3K11/MLK3, MAP2K7/MKK7 and MAPK8IP1/JIP1. Found in a complex with SH3RF1, RAC2, MAP3K7/TAK1, MAP2K7/MKK7, MAPK8IP1/JIP1 and MAPK9/JNK2. Mg(2+) is required as a cofactor. In terms of processing, phosphorylated by TAOK2. Dually phosphorylated on Thr-183 and Tyr-185 by MAP2K7 and MAP2K4, which activates the enzyme. May be phosphorylated at Thr-183 and Tyr-185 by MAP3K1/MEKK1. Phosphorylated form is more concentrated at synapses than none-phosphorylated. In terms of tissue distribution, brain (at protein level).

It localises to the cytoplasm. The protein localises to the nucleus. Its subcellular location is the synapse. It catalyses the reaction L-seryl-[protein] + ATP = O-phospho-L-seryl-[protein] + ADP + H(+). It carries out the reaction L-threonyl-[protein] + ATP = O-phospho-L-threonyl-[protein] + ADP + H(+). Inhibited by SERPINB3. Activated by threonine and tyrosine phosphorylation by either of two dual specificity kinases, MAP2K4 and MAP2K7. MAP2K4 shows a strong preference for Tyr-185 while MAP2K7 phosphorylates Tyr-183 preferentially. Inhibited by dual specificity phosphatases, such as DUSP1. Its function is as follows. Serine/threonine-protein kinase involved in various processes such as cell proliferation, differentiation, migration, transformation and programmed cell death. Extracellular stimuli such as pro-inflammatory cytokines or physical stress stimulate the stress-activated protein kinase/c-Jun N-terminal kinase (SAP/JNK) signaling pathway. In this cascade, two dual specificity kinases MAP2K4/MKK4 and MAP2K7/MKK7 phosphorylate and activate MAPK8/JNK1. In turn, MAPK8/JNK1 phosphorylates a number of transcription factors, primarily components of AP-1 such as JUN, JDP2 and ATF2 and thus regulates AP-1 transcriptional activity. Phosphorylates the replication licensing factor CDT1, inhibiting the interaction between CDT1 and the histone H4 acetylase HBO1 to replication origins. Loss of this interaction abrogates the acetylation required for replication initiation. Promotes stressed cell apoptosis by phosphorylating key regulatory factors including p53/TP53 and Yes-associates protein YAP1. In T-cells, MAPK8 and MAPK9 are required for polarized differentiation of T-helper cells into Th1 cells. Contributes to the survival of erythroid cells by phosphorylating the antagonist of cell death BAD upon EPO stimulation. Mediates starvation-induced BCL2 phosphorylation, BCL2 dissociation from BECN1, and thus activation of autophagy. Phosphorylates STMN2 and hence regulates microtubule dynamics, controlling neurite elongation in cortical neurons. In the developing brain, through its cytoplasmic activity on STMN2, negatively regulates the rate of exit from multipolar stage and of radial migration from the ventricular zone. Phosphorylates several other substrates including heat shock factor protein 4 (HSF4), the deacetylase SIRT1, ELK1, or the E3 ligase ITCH. Phosphorylates the CLOCK-BMAL1 heterodimer and plays a role in the regulation of the circadian clock. Phosphorylates the heat shock transcription factor HSF1, suppressing HSF1-induced transcriptional activity. Phosphorylates POU5F1, which results in the inhibition of POU5F1's transcriptional activity and enhances its proteasomal degradation. Phosphorylates JUND and this phosphorylation is inhibited in the presence of MEN1. In neurons, phosphorylates SYT4 which captures neuronal dense core vesicles at synapses. Phosphorylates EIF4ENIF1/4-ET in response to oxidative stress, promoting P-body assembly. Phosphorylates SIRT6 in response to oxidative stress, stimulating its mono-ADP-ribosyltransferase activity. Phosphorylates NLRP3, promoting assembly of the NLRP3 inflammasome. Phosphorylates ALKBH5 in response to reactive oxygen species (ROS), promoting ALKBH5 sumoylation and inactivation. This Mus musculus (Mouse) protein is Mitogen-activated protein kinase 8 (Mapk8).